The following is a 119-amino-acid chain: MIVGIGIDIIELNRIEKMIDGKLKFMERILTESERNVAKGLKGSRLTEFVAGRFAAKEAYSKAVGTGIGKEVSFLDIEVRNDDRGKPILITSTEHIVHLSISHSKEFAVAQVVLESSSR.

Residues Asp-8 and Glu-58 each contribute to the Mg(2+) site.

It belongs to the P-Pant transferase superfamily. AcpS family. It depends on Mg(2+) as a cofactor.

Its subcellular location is the cytoplasm. It catalyses the reaction apo-[ACP] + CoA = holo-[ACP] + adenosine 3',5'-bisphosphate + H(+). Transfers the 4'-phosphopantetheine moiety from coenzyme A to a Ser of acyl-carrier-protein. This Bacillus cereus (strain ATCC 10987 / NRS 248) protein is Holo-[acyl-carrier-protein] synthase.